The primary structure comprises 163 residues: Nucleotide-binding protein Mflv_5248 (163 aa).

Belongs to the YajQ family.

In terms of biological role, nucleotide-binding protein. The protein is Nucleotide-binding protein Mflv_5248 of Mycolicibacterium gilvum (strain PYR-GCK) (Mycobacterium gilvum (strain PYR-GCK)).